Consider the following 382-residue polypeptide: F-box/kelch-repeat protein At3g16580 (382 aa).

The F-box domain maps to 9-55; that stretch reads WEFSLSLPWELIEEILSRVPPESLLRFKTVSKQWNALFRDKTFINNH. Kelch repeat units follow at residues 150–196 and 334–381; these read KIFA…NIYT and WIYV…AELQ.

The protein is F-box/kelch-repeat protein At3g16580 of Arabidopsis thaliana (Mouse-ear cress).